The sequence spans 208 residues: MTQKNGPLRVGIGGPVGSGKTTLTEKLCKAMRDKYSVAVITNDIYTQEDALILARRQALSEDRIIGVETGGCPHTAIREDASINLQAVVEMTRRFPDLDVVFIESGGDNLAATFSPDLADLTLYVISVCQGEEIPRKGGPGITRSDFLVINKSDLAPYVHVDLEVMEADAMRMRAKRPFGFTDLHRGKGVQEIIDFIVENGGLEPRSN.

Residue 14–21 (GPVGSGKT) coordinates GTP.

The protein belongs to the SIMIBI class G3E GTPase family. UreG subfamily. As to quaternary structure, homodimer. UreD, UreF and UreG form a complex that acts as a GTP-hydrolysis-dependent molecular chaperone, activating the urease apoprotein by helping to assemble the nickel containing metallocenter of UreC. The UreE protein probably delivers the nickel.

It is found in the cytoplasm. In terms of biological role, facilitates the functional incorporation of the urease nickel metallocenter. This process requires GTP hydrolysis, probably effectuated by UreG. Functionally, disruption of the ure1 gene cluster suggests that it protects brucellae during their passage through the stomach. The major route of infection in human brucellosis is oral. The chain is Urease accessory protein UreG 1 from Brucella abortus (strain 2308).